A 429-amino-acid polypeptide reads, in one-letter code: Adenylosuccinate synthetase (429 aa).

GTP contacts are provided by residues 12-18 (GDEGKGK) and 40-42 (GHT). The active-site Proton acceptor is Asp13. Residues Asp13 and Gly40 each contribute to the Mg(2+) site. IMP contacts are provided by residues 13-16 (DEGK), 38-41 (NAGH), Thr128, Arg142, Gln223, Thr238, and Arg302. Catalysis depends on His41, which acts as the Proton donor. 298-304 (TTTGRPR) is a binding site for substrate. GTP contacts are provided by residues Arg304, 330 to 332 (SID), and 412 to 414 (SVG).

Belongs to the adenylosuccinate synthetase family. Homodimer. Requires Mg(2+) as cofactor.

It localises to the cytoplasm. It carries out the reaction IMP + L-aspartate + GTP = N(6)-(1,2-dicarboxyethyl)-AMP + GDP + phosphate + 2 H(+). It functions in the pathway purine metabolism; AMP biosynthesis via de novo pathway; AMP from IMP: step 1/2. Plays an important role in the de novo pathway of purine nucleotide biosynthesis. Catalyzes the first committed step in the biosynthesis of AMP from IMP. This Bacillus thuringiensis (strain Al Hakam) protein is Adenylosuccinate synthetase.